We begin with the raw amino-acid sequence, 345 residues long: MAGLDREKALDNALAQIDKQFGKGSVMRLGDDTRPPVQAIPTGSIALDVALGIGGLPRGRIIEIYGPESSGKTTVALHAVANAQAAGGIAAFIDAEHALDPEYAGKLGVDTDGLLVSQPDTGEQALEIADMLVRSGALDIIVIDSVAALVPRAEIEGEMGDSHVGLQARLMSQALRKMTAALANSGTTAIFINQLREKIGVMFGSPETTTGGKALKFYASVRLDVRRIETLKDGTEAVGNRTRVKVVKNKVAPPFRTAEFDIVYGGGISREGSLIDMGVEHGIIRKSGAWYTYDGDQLGQGKENARSFLRDNPDLANEIEKKIKEKLGILPSLESDAVAPVPVDL.

66-73 provides a ligand contact to ATP; sequence GPESSGKT.

The protein belongs to the RecA family.

The protein resides in the cytoplasm. Can catalyze the hydrolysis of ATP in the presence of single-stranded DNA, the ATP-dependent uptake of single-stranded DNA by duplex DNA, and the ATP-dependent hybridization of homologous single-stranded DNAs. It interacts with LexA causing its activation and leading to its autocatalytic cleavage. This Frankia casuarinae (strain DSM 45818 / CECT 9043 / HFP020203 / CcI3) protein is Protein RecA.